Reading from the N-terminus, the 100-residue chain is RNA-binding protein YlxQ (100 aa).

The protein belongs to the eukaryotic ribosomal protein eL8 family.

In terms of biological role, RNA-binding protein that recognizes the K-turn motif present in ribosomal RNA, but also in box C/D and box C'/D' sRNAs. The sequence is that of RNA-binding protein YlxQ from Bacillus subtilis (strain 168).